We begin with the raw amino-acid sequence, 62 residues long: Large ribosomal subunit protein uL29 (62 aa).

Belongs to the universal ribosomal protein uL29 family.

The sequence is that of Large ribosomal subunit protein uL29 from Trichlorobacter lovleyi (strain ATCC BAA-1151 / DSM 17278 / SZ) (Geobacter lovleyi).